We begin with the raw amino-acid sequence, 167 residues long: 3-dehydroquinate dehydratase (167 aa).

The active-site Proton acceptor is tyrosine 22. Substrate-binding residues include asparagine 76, histidine 82, and aspartate 89. The active-site Proton donor is the histidine 102. Substrate-binding positions include 103-104 (LT) and arginine 113.

Belongs to the type-II 3-dehydroquinase family. Homododecamer.

It catalyses the reaction 3-dehydroquinate = 3-dehydroshikimate + H2O. Its pathway is metabolic intermediate biosynthesis; chorismate biosynthesis; chorismate from D-erythrose 4-phosphate and phosphoenolpyruvate: step 3/7. In terms of biological role, catalyzes a trans-dehydration via an enolate intermediate. The chain is 3-dehydroquinate dehydratase from Helicobacter pylori (strain P12).